The sequence spans 271 residues: Hematopoietically-expressed homeobox protein Hhex (271 aa).

The tract at residues 1–138 (MQFPHPGPAA…PFLQRPLHKR (138 aa)) is interaction with SOX13. Serine 54 bears the Phosphoserine mark. Positions 138-197 (RKGGQVRFSNDQTVELEKKFETQKYLSPPERKRLAKMLQLSERQVKTWFQNRRAKWRRLK) form a DNA-binding region, homeobox. The required for WNT signaling induction stretch occupies residues 138-271 (RKGGQVRFSN…EGDKGYFNAG (134 aa)). The interval 195–271 (RLKQENPQSN…EGDKGYFNAG (77 aa)) is disordered. The span at 212–242 (LDTSCEQGQDLPSEQNKGASLDRSQCSPSPA) shows a compositional bias: polar residues. Positions 245 to 261 (EDPDSEISEDSDQEVDI) are enriched in acidic residues.

Interacts with CD81; the interaction prevents nuclear translocation of HHEX. Interacts (via N-terminus) with SOX13; abolishes the SOX13-mediated inhibition of WNT-mediated transcriptional activity via competitive inhibition of the SOX13-TCF7 complex. Interacts with EIF4E; the interaction inhibits EIF4E-mediated mRNA nuclear export.

It localises to the nucleus. The protein resides in the nuclear body. Its subcellular location is the cytoplasm. Its function is as follows. Recognizes the DNA sequence 5'-ATTAA-3'. Transcriptional repressor. Activator of WNT-mediated transcription in conjunction with CTNNB1. Establishes anterior identity at two levels; acts early to enhance canonical WNT-signaling by repressing expression of TLE4, and acts later to inhibit NODAL-signaling by directly targeting NODAL. Inhibits EIF4E-mediated mRNA nuclear export. May play a role in hematopoietic differentiation. The polypeptide is Hematopoietically-expressed homeobox protein Hhex (Hhex) (Mus musculus (Mouse)).